A 162-amino-acid chain; its full sequence is Lipoprotein signal peptidase (162 aa).

2 helical membrane passes run 66 to 86 (PFFIAVTLVAMAAIAITFRKL) and 92 to 112 (LAAVSLSLIFSGAVGNLIDRV). Residues aspartate 119 and aspartate 137 contribute to the active site. Residues 132–152 (AFNVADSAICVGVALLALDMI) traverse the membrane as a helical segment.

This sequence belongs to the peptidase A8 family.

The protein resides in the cell inner membrane. It carries out the reaction Release of signal peptides from bacterial membrane prolipoproteins. Hydrolyzes -Xaa-Yaa-Zaa-|-(S,diacylglyceryl)Cys-, in which Xaa is hydrophobic (preferably Leu), and Yaa (Ala or Ser) and Zaa (Gly or Ala) have small, neutral side chains.. It participates in protein modification; lipoprotein biosynthesis (signal peptide cleavage). Functionally, this protein specifically catalyzes the removal of signal peptides from prolipoproteins. The sequence is that of Lipoprotein signal peptidase from Geobacter metallireducens (strain ATCC 53774 / DSM 7210 / GS-15).